We begin with the raw amino-acid sequence, 421 residues long: tRNA (guanine(37)-N(1))-methyltransferase (421 aa).

S-adenosyl-L-methionine is bound by residues R198, 242 to 243 (DL), 270 to 271 (DA), and N293.

It belongs to the class I-like SAM-binding methyltransferase superfamily. TRM5/TYW2 family. Monomer.

It is found in the mitochondrion matrix. It localises to the nucleus. The protein resides in the cytoplasm. The catalysed reaction is guanosine(37) in tRNA + S-adenosyl-L-methionine = N(1)-methylguanosine(37) in tRNA + S-adenosyl-L-homocysteine + H(+). Its function is as follows. Specifically methylates the N1 position of guanosine-37 in various cytoplasmic and mitochondrial tRNAs. Methylation is not dependent on the nature of the nucleoside 5' of the target nucleoside. This is the first step in the biosynthesis of wybutosine (yW), a modified base adjacent to the anticodon of tRNAs and required for accurate decoding. The polypeptide is tRNA (guanine(37)-N(1))-methyltransferase (Paramecium tetraurelia).